Reading from the N-terminus, the 568-residue chain is U6 small nuclear RNA (adenine-(43)-N(6))-methyltransferase (568 aa).

A disordered region spans residues 1-20 (MSEIDTNDIKKEMDNKNYRD). The span at 7 to 20 (NDIKKEMDNKNYRD) shows a compositional bias: basic and acidic residues. The S-adenosyl-L-methionine site is built by Arg117, Gly151, Asp175, and Asn250. Disordered stretches follow at residues 363–383 (KENN…INNN), 403–431 (NLDS…NNNN), and 503–538 (DPKI…NKNN). 3 stretches are compositionally biased toward low complexity: residues 365–383 (NNNI…INNN), 409–431 (NNNN…NNNN), and 507–538 (NNNN…NKNN).

This sequence belongs to the methyltransferase superfamily. METTL16/RlmF family.

It carries out the reaction adenosine in U6 snRNA + S-adenosyl-L-methionine = N(6)-methyladenosine in U6 snRNA + S-adenosyl-L-homocysteine + H(+). In terms of biological role, RNA N6-methyltransferase that mediates N6-methylation of adenine of U6 small nuclear RNA (U6 snRNA). The polypeptide is U6 small nuclear RNA (adenine-(43)-N(6))-methyltransferase (Dictyostelium discoideum (Social amoeba)).